We begin with the raw amino-acid sequence, 275 residues long: MVRKIAIYGKGGIGKSTTTQNTASAMAHFHNQRVMIHGCDPKADSTRMILGGKMQTTMMDTLREEGEEACMDLDNVMSTGFKDIKCVESGGPEPGVGCAGRGVITAITIMEHMKVYDDNDFVFFDVLGDVVCGGFAMPIRDGKAEEIYIVASGEMMALYAANNLCKGMVKYAEQSGVRLGGIICNSRNVDGEKELLEEFCKRIGTQMIHFVPRDNIVQKAEFNKRTVVDFDAECSQAHEYSELARKIIENDNFVIPDPMTMDELEEMVVSYGLMD.

9–16 (GKGGIGKS) is an ATP binding site. A [4Fe-4S] cluster-binding site is contributed by Cys-98. At Arg-101 the chain carries ADP-ribosylarginine; by dinitrogenase reductase ADP-ribosyltransferase. Cys-132 lines the [4Fe-4S] cluster pocket.

The protein belongs to the NifH/BchL/ChlL family. In terms of assembly, homodimer. [4Fe-4S] cluster serves as cofactor. The reversible ADP-ribosylation of Arg-101 inactivates the nitrogenase reductase and regulates nitrogenase activity.

It carries out the reaction N2 + 8 reduced [2Fe-2S]-[ferredoxin] + 16 ATP + 16 H2O = H2 + 8 oxidized [2Fe-2S]-[ferredoxin] + 2 NH4(+) + 16 ADP + 16 phosphate + 6 H(+). The key enzymatic reactions in nitrogen fixation are catalyzed by the nitrogenase complex, which has 2 components: the iron protein and the molybdenum-iron protein. This is Nitrogenase iron protein 1 (nifH1) from Methanobacterium ivanovii.